Consider the following 1137-residue polypeptide: UDP-N-acetylglucosamine transferase subunit ALG13 (1137 aa).

The tract at residues 1 to 125 (MKCVFVTVGT…LHKEGHLFYC (125 aa)) is glycosyltransferase activity. Positions 126-400 (TCRVLTCPGQ…GSKKNRNNAV (275 aa)) are deubiquitinase activity. Positions 231-352 (LFRKLTAKDA…SGHYDSVYSK (122 aa)) constitute an OTU domain. Asp-239 serves as the catalytic For deubiquitinase activity. Cys-242 acts as the Nucleophile; for deubiquitinase activity in catalysis. The active-site For deubiquitinase activity is the His-345. A Tudor domain is found at 492-552 (QYYLGDKCQV…KPVTQVMSVP (61 aa)). 2 disordered regions span residues 641–660 (HFHP…MPRN) and 911–974 (IPHA…SGSD). Pro residues-rich tracts occupy residues 918-946 (LPPP…PPPA) and 956-967 (QPPPPLPPPPYS).

Belongs to the glycosyltransferase 28 family. As to quaternary structure, forms with ALG14 the active heterodimeric UDP-N-acetylglucosamine transferase complex. Not able to interact with ALG14 to form an active UDP-N-acetylglucosamine transferase complex.

It localises to the endoplasmic reticulum membrane. It catalyses the reaction an N-acetyl-alpha-D-glucosaminyl-diphospho-di-trans,poly-cis-dolichol + UDP-N-acetyl-alpha-D-glucosamine = an N,N'-diacetylchitobiosyl-diphospho-di-trans,poly-cis-dolichol + UDP + H(+). It participates in protein modification; protein glycosylation. Functionally, catalytic subunit of the UDP-N-acetylglucosamine transferase complex that operates in the biosynthetic pathway of dolichol-linked oligosaccharides, the glycan precursors employed in protein asparagine (N)-glycosylation. The assembly of dolichol-linked oligosaccharides begins on the cytosolic side of the endoplasmic reticulum membrane and finishes in its lumen. The sequential addition of sugars to dolichol pyrophosphate produces dolichol-linked oligosaccharides containing fourteen sugars, including two GlcNAcs, nine mannoses and three glucoses. Once assembled, the oligosaccharide is transferred from the lipid to nascent proteins by oligosaccharyltransferases. On the cytoplasmic face of the endoplasmic reticulum, the dimeric ALG13/ALG14 complex catalyzes the second step of dolichol pyrophosphate biosynthesis, transferring a beta1,4-linked N-acetylglucosamine (GlcNAc) from UDP-GlcNAc to GlcNAc-pyrophosphatedolichol (Gn-PDol) to produce N,N'-diacetylchitobiosyl diphosphodolichol. N,N'-diacetylchitobiosyl diphosphodolichol is a substrate for ALG1, the following enzyme in the biosynthetic pathway. In terms of biological role, no glycosyltransferase or deubiquitinase activity is detected for this potential multifunctional enzyme. In Homo sapiens (Human), this protein is UDP-N-acetylglucosamine transferase subunit ALG13.